The chain runs to 555 residues: Glucose-6-phosphate isomerase (555 aa).

Glutamate 360 acts as the Proton donor in catalysis. Catalysis depends on residues histidine 391 and lysine 519.

The protein belongs to the GPI family.

Its subcellular location is the cytoplasm. It carries out the reaction alpha-D-glucose 6-phosphate = beta-D-fructose 6-phosphate. The protein operates within carbohydrate biosynthesis; gluconeogenesis. It functions in the pathway carbohydrate degradation; glycolysis; D-glyceraldehyde 3-phosphate and glycerone phosphate from D-glucose: step 2/4. In terms of biological role, catalyzes the reversible isomerization of glucose-6-phosphate to fructose-6-phosphate. This chain is Glucose-6-phosphate isomerase, found in Acinetobacter baumannii (strain AB307-0294).